Here is a 464-residue protein sequence, read N- to C-terminus: Argininosuccinate lyase (464 aa).

This sequence belongs to the lyase 1 family. Argininosuccinate lyase subfamily.

The protein resides in the cytoplasm. The enzyme catalyses 2-(N(omega)-L-arginino)succinate = fumarate + L-arginine. It participates in amino-acid biosynthesis; L-arginine biosynthesis; L-arginine from L-ornithine and carbamoyl phosphate: step 3/3. The protein is Argininosuccinate lyase of Pseudomonas aeruginosa (strain UCBPP-PA14).